Reading from the N-terminus, the 229-residue chain is PKHD-type hydroxylase RPA3479 (229 aa).

The Fe2OG dioxygenase domain occupies 78–180 (QIFPPLFNRY…RVASFFWLQS (103 aa)). Positions 98, 100, and 161 each coordinate Fe cation. R171 contributes to the 2-oxoglutarate binding site.

Fe(2+) is required as a cofactor. Requires L-ascorbate as cofactor.

The sequence is that of PKHD-type hydroxylase RPA3479 from Rhodopseudomonas palustris (strain ATCC BAA-98 / CGA009).